We begin with the raw amino-acid sequence, 176 residues long: ATP-dependent protease subunit HslV (176 aa).

Residue T5 is part of the active site. The Na(+) site is built by G161, C164, and T167.

This sequence belongs to the peptidase T1B family. HslV subfamily. As to quaternary structure, a double ring-shaped homohexamer of HslV is capped on each side by a ring-shaped HslU homohexamer. The assembly of the HslU/HslV complex is dependent on binding of ATP.

It localises to the cytoplasm. It catalyses the reaction ATP-dependent cleavage of peptide bonds with broad specificity.. Its activity is regulated as follows. Allosterically activated by HslU binding. Protease subunit of a proteasome-like degradation complex believed to be a general protein degrading machinery. In Wolinella succinogenes (strain ATCC 29543 / DSM 1740 / CCUG 13145 / JCM 31913 / LMG 7466 / NCTC 11488 / FDC 602W) (Vibrio succinogenes), this protein is ATP-dependent protease subunit HslV.